The following is a 310-amino-acid chain: Tagatose-6-phosphate kinase (310 aa).

Belongs to the carbohydrate kinase PfkB family. LacC subfamily.

It catalyses the reaction D-tagatofuranose 6-phosphate + ATP = D-tagatofuranose 1,6-bisphosphate + ADP + H(+). It participates in carbohydrate metabolism; D-tagatose 6-phosphate degradation; D-glyceraldehyde 3-phosphate and glycerone phosphate from D-tagatose 6-phosphate: step 1/2. This Streptococcus agalactiae serotype Ia (strain ATCC 27591 / A909 / CDC SS700) protein is Tagatose-6-phosphate kinase.